Consider the following 373-residue polypeptide: Chaperone protein DnaJ (373 aa).

The J domain occupies 4-68 (NYYQILGVSK…QKRAAYDRLG (65 aa)). Residues 136–214 (GIEKNINFSS…CHGMGRYHKQ (79 aa)) form a CR-type zinc finger. Cys149, Cys152, Cys166, Cys169, Cys188, Cys191, Cys202, and Cys205 together coordinate Zn(2+). 4 CXXCXGXG motif repeats span residues 149-156 (CDTCHGSG), 166-173 (CDACSGVG), 188-195 (CHKCQGNG), and 202-209 (CKKCHGMG).

Belongs to the DnaJ family. Homodimer. Requires Zn(2+) as cofactor.

The protein localises to the cytoplasm. Participates actively in the response to hyperosmotic and heat shock by preventing the aggregation of stress-denatured proteins and by disaggregating proteins, also in an autonomous, DnaK-independent fashion. Unfolded proteins bind initially to DnaJ; upon interaction with the DnaJ-bound protein, DnaK hydrolyzes its bound ATP, resulting in the formation of a stable complex. GrpE releases ADP from DnaK; ATP binding to DnaK triggers the release of the substrate protein, thus completing the reaction cycle. Several rounds of ATP-dependent interactions between DnaJ, DnaK and GrpE are required for fully efficient folding. Also involved, together with DnaK and GrpE, in the DNA replication of plasmids through activation of initiation proteins. This Rickettsia rickettsii (strain Iowa) protein is Chaperone protein DnaJ.